The following is a 401-amino-acid chain: S-adenosylmethionine synthase (401 aa).

Glycine 136–aspartate 141 is a binding site for ATP.

Belongs to the AdoMet synthase 2 family. It depends on Mg(2+) as a cofactor.

The catalysed reaction is L-methionine + ATP + H2O = S-adenosyl-L-methionine + phosphate + diphosphate. The protein operates within amino-acid biosynthesis; S-adenosyl-L-methionine biosynthesis; S-adenosyl-L-methionine from L-methionine: step 1/1. Its function is as follows. Catalyzes the formation of S-adenosylmethionine from methionine and ATP. The sequence is that of S-adenosylmethionine synthase from Pyrococcus furiosus (strain ATCC 43587 / DSM 3638 / JCM 8422 / Vc1).